The primary structure comprises 1368 residues: DNA-directed RNA polymerase subunit beta (1368 aa).

Belongs to the RNA polymerase beta chain family. In terms of assembly, the RNAP catalytic core consists of 2 alpha, 1 beta, 1 beta' and 1 omega subunit. When a sigma factor is associated with the core the holoenzyme is formed, which can initiate transcription.

The enzyme catalyses RNA(n) + a ribonucleoside 5'-triphosphate = RNA(n+1) + diphosphate. Its function is as follows. DNA-dependent RNA polymerase catalyzes the transcription of DNA into RNA using the four ribonucleoside triphosphates as substrates. In Burkholderia thailandensis (strain ATCC 700388 / DSM 13276 / CCUG 48851 / CIP 106301 / E264), this protein is DNA-directed RNA polymerase subunit beta.